Consider the following 121-residue polypeptide: Large ribosomal subunit protein uL22 (121 aa).

Belongs to the universal ribosomal protein uL22 family. In terms of assembly, part of the 50S ribosomal subunit.

Its function is as follows. This protein binds specifically to 23S rRNA; its binding is stimulated by other ribosomal proteins, e.g. L4, L17, and L20. It is important during the early stages of 50S assembly. It makes multiple contacts with different domains of the 23S rRNA in the assembled 50S subunit and ribosome. In terms of biological role, the globular domain of the protein is located near the polypeptide exit tunnel on the outside of the subunit, while an extended beta-hairpin is found that lines the wall of the exit tunnel in the center of the 70S ribosome. The chain is Large ribosomal subunit protein uL22 from Hydrogenobaculum sp. (strain Y04AAS1).